The chain runs to 266 residues: Small ribosomal subunit protein uS3m (266 aa).

The protein belongs to the universal ribosomal protein uS3 family.

It is found in the mitochondrion. The chain is Small ribosomal subunit protein uS3m (MRPS3) from Mycosarcoma maydis (Corn smut fungus).